A 135-amino-acid chain; its full sequence is Small ribosomal subunit protein uS9 (135 aa).

The tract at residues Ser96 to Arg135 is disordered. The segment covering Ala97 to Ala115 has biased composition (basic and acidic residues). Residues Lys116–Arg135 are compositionally biased toward basic residues.

The protein belongs to the universal ribosomal protein uS9 family.

This Prochlorococcus marinus (strain MIT 9313) protein is Small ribosomal subunit protein uS9.